Reading from the N-terminus, the 199-residue chain is MIKLIVGLGNPGAEYTATRHNAGFWLVDQLAREAGATLRDERRFHGFYAKARLHGEEVHLLEPQTYMNRSGQSVVALASFFKILPDQILVAHDELDLPPGTVKLKLGGGSGGHNGLKDISAHLSSQQYWRLRIGIGHPRDLIPEGARAGAKPDVANFVLKPPRREEQDVIDASIERALAVMPMVVKGELDRATMQLHRN.

Residue Y15 participates in tRNA binding. Residue H20 is the Proton acceptor of the active site. 3 residues coordinate tRNA: Y66, N68, and N114.

This sequence belongs to the PTH family. Monomer.

It localises to the cytoplasm. It carries out the reaction an N-acyl-L-alpha-aminoacyl-tRNA + H2O = an N-acyl-L-amino acid + a tRNA + H(+). Hydrolyzes ribosome-free peptidyl-tRNAs (with 1 or more amino acids incorporated), which drop off the ribosome during protein synthesis, or as a result of ribosome stalling. Functionally, catalyzes the release of premature peptidyl moieties from peptidyl-tRNA molecules trapped in stalled 50S ribosomal subunits, and thus maintains levels of free tRNAs and 50S ribosomes. This chain is Peptidyl-tRNA hydrolase, found in Burkholderia ambifaria (strain MC40-6).